Consider the following 418-residue polypeptide: CinA-like protein (418 aa).

It belongs to the CinA family.

This is CinA-like protein from Leptospira interrogans serogroup Icterohaemorrhagiae serovar copenhageni (strain Fiocruz L1-130).